A 337-amino-acid chain; its full sequence is Glyceraldehyde-3-phosphate dehydrogenase (337 aa).

NAD(+)-binding positions include 12–13 (RI), D34, and R79. Residues 150–152 (SCT), T181, 210–211 (TG), and R233 contribute to the D-glyceraldehyde 3-phosphate site. The Nucleophile role is filled by C151. N315 contributes to the NAD(+) binding site.

It belongs to the glyceraldehyde-3-phosphate dehydrogenase family. Homotetramer.

The protein localises to the cytoplasm. The catalysed reaction is D-glyceraldehyde 3-phosphate + phosphate + NAD(+) = (2R)-3-phospho-glyceroyl phosphate + NADH + H(+). It participates in carbohydrate degradation; glycolysis; pyruvate from D-glyceraldehyde 3-phosphate: step 1/5. In Podospora anserina (Pleurage anserina), this protein is Glyceraldehyde-3-phosphate dehydrogenase (GPD).